The following is a 783-amino-acid chain: Cilia- and flagella-associated protein 91 (783 aa).

Residues 748–760 are compositionally biased toward acidic residues; sequence EDFELEEEAESLD. The tract at residues 748–783 is disordered; it reads EDFELEEEAESLDSEVPTVSVSKTSTIKPTQDEGEG. Residues 764–776 are compositionally biased toward polar residues; the sequence is PTVSVSKTSTIKP.

This sequence belongs to the CFAP91 family. In terms of assembly, part of a complex containing MYCBP, AKAP1 and PRKAR2B. Interacts with MYCBP and AKAP1. Interacts with CFAP61. Phosphorylated by PKA. In terms of tissue distribution, expressed in the testis, in cells involved in spermatogenesis.

It localises to the cytoplasm. The protein resides in the mitochondrion. The protein localises to the cytoskeleton. It is found in the cilium axoneme. Involved in sperm flagellum axonemal organization and function. May regulate cilium motility through its role in the assembly of the axonemal radial spokes. This Mus musculus (Mouse) protein is Cilia- and flagella-associated protein 91.